Here is a 203-residue protein sequence, read N- to C-terminus: uncharacterized protein (203 aa).

4 helical membrane passes run 9 to 29 (YNVFVANLALVLGFMLNIVVA), 42 to 62 (FLFLTPFLGIVAASIFYFFDV), 86 to 106 (SGVFVFFANILVNVILLALLV), and 126 to 146 (YPLLWSAVGVSIFLSLISIGL). Composition is skewed to basic and acidic residues over residues 164–174 (GEPTAADKTDS) and 182–191 (DQTKSKKDGD). The disordered stretch occupies residues 164 to 203 (GEPTAADKTDSRPVVVDLDQTKSKKDGDNPPQASGDMTSL). The span at 194–203 (PQASGDMTSL) shows a compositional bias: polar residues.

The protein localises to the cell membrane. This is an uncharacterized protein from Mycoplasma pneumoniae (strain ATCC 29342 / M129 / Subtype 1) (Mycoplasmoides pneumoniae).